Reading from the N-terminus, the 323-residue chain is MSSVGTAEPDGDQRDRQVSKLIFFLFVFGAVLLCVGVLISIFGYQACQYKPLSHCSMVLKIAGPSCAVMGLGTVILARSRARLQLRERQRQGHQDPDQSFFCGESRQFAQCLIFGFLFLTSGMLISILGIWVPGCGSDWAQEPLNETNSGEGEPQICSFLSLQIMGPLIVLVGLCFFVVAHVKKKSNLSSSRDTSEIEGGHTHSTEPVHITVGDSVIIFPPPPPPYFAESSAAAPSPGANSLHRIENPPSYSSLFNLSRTPTPENQGAASERDREVIYTISGPGSSSESSHTGHLPLDLPPRYEEKETAPATPLGAPSESSPP.

4 helical membrane passes run 22 to 42 (IFFL…ISIF), 57 to 77 (MVLK…VILA), 112 to 132 (LIFG…GIWV), and 159 to 179 (FLSL…FFVV). The segment covering 251-268 (YSSLFNLSRTPTPENQGA) has biased composition (polar residues). A disordered region spans residues 251–323 (YSSLFNLSRT…LGAPSESSPP (73 aa)). The segment covering 281-290 (SGPGSSSESS) has biased composition (low complexity).

Its subcellular location is the membrane. This Rattus norvegicus (Rat) protein is Transmembrane protein 171 (Tmem171).